A 585-amino-acid chain; its full sequence is Arginine--tRNA ligase (585 aa).

A 'HIGH' region motif is present at residues 126–136 (PNIAKEMHVGH).

It belongs to the class-I aminoacyl-tRNA synthetase family. In terms of assembly, monomer.

Its subcellular location is the cytoplasm. The catalysed reaction is tRNA(Arg) + L-arginine + ATP = L-arginyl-tRNA(Arg) + AMP + diphosphate. This chain is Arginine--tRNA ligase, found in Cyanothece sp. (strain PCC 7425 / ATCC 29141).